A 258-amino-acid polypeptide reads, in one-letter code: Sec-independent protein translocase protein TatC (258 aa).

At 2 to 23 (SVEDTQPLITHLIELRKRLLNC) the chain is on the cytoplasmic side. A helical transmembrane segment spans residues 24 to 44 (IIAVIVIFLCLVYFANDIYHL). Topologically, residues 45–75 (VSAPLIKQLPQGSTMIATDVASPFFTPIKLT) are periplasmic. A helical membrane pass occupies residues 76-96 (FMVSLILSAPVILYQVWAFIA). Residues 97 to 115 (PALYKHERRLVVPLLVSSS) are Cytoplasmic-facing. The chain crosses the membrane as a helical span at residues 116–136 (LLFYIGMAFAYFVVFPLAFGF). Residues 137–156 (LANTAPEGVQVSTDIASYLS) lie on the Periplasmic side of the membrane. A helical membrane pass occupies residues 157 to 177 (FVMALFMAFGVSFEVPVAIVL). Over 178-192 (LCWMGITSPEDLRKK) the chain is Cytoplasmic. A helical membrane pass occupies residues 193–210 (RPYVLVGAFVVGMLLTPP). A topological domain (periplasmic) is located at residue Asp-211. A helical transmembrane segment spans residues 212 to 232 (VFSQTLLAIPMYCLFEIGVFF). The Cytoplasmic portion of the chain corresponds to 233–258 (SRFYVGKGRNREEENDAEAESEKTEE).

The protein belongs to the TatC family. In terms of assembly, the Tat system comprises two distinct complexes: a TatABC complex, containing multiple copies of TatA, TatB and TatC subunits, and a separate TatA complex, containing only TatA subunits. Substrates initially bind to the TatABC complex, which probably triggers association of the separate TatA complex to form the active translocon. TatC can form a distinct, stable, multimeric complex independent of TatA and TatB. Each of TatA, TatB and TatC are able to interact in pairs without the third partner. Interacts with the signal sequence of DmsA and DmsD.

The protein localises to the cell inner membrane. Functionally, part of the twin-arginine translocation (Tat) system that transports large folded proteins containing a characteristic twin-arginine motif in their signal peptide across membranes. Together with TatB, TatC is part of a receptor directly interacting with Tat signal peptides. This chain is Sec-independent protein translocase protein TatC, found in Escherichia coli (strain K12).